The primary structure comprises 349 residues: Isopentenyl-diphosphate delta-isomerase (349 aa).

Substrate is bound at residue 5–6 (RK). FMN contacts are provided by residues serine 61, 62–64 (SMT), serine 92, and asparagine 120. 92–94 (SMR) is a binding site for substrate. Glutamine 159 serves as a coordination point for substrate. Glutamate 160 contacts Mg(2+). FMN is bound by residues lysine 189, threonine 219, 269–271 (GLR), and 290–291 (AR).

It belongs to the IPP isomerase type 2 family. In terms of assembly, homooctamer. Dimer of tetramers. It depends on FMN as a cofactor. NADPH serves as cofactor. Requires Mg(2+) as cofactor.

It localises to the cytoplasm. It catalyses the reaction isopentenyl diphosphate = dimethylallyl diphosphate. Functionally, involved in the biosynthesis of isoprenoids. Catalyzes the 1,3-allylic rearrangement of the homoallylic substrate isopentenyl (IPP) to its allylic isomer, dimethylallyl diphosphate (DMAPP). The chain is Isopentenyl-diphosphate delta-isomerase from Picrophilus torridus (strain ATCC 700027 / DSM 9790 / JCM 10055 / NBRC 100828 / KAW 2/3).